We begin with the raw amino-acid sequence, 154 residues long: Transcription antitermination protein NusB (154 aa).

Residues 132 to 154 (KDKQSPQSTPLDDSDKDESDQTN) are disordered. Positions 143-154 (DDSDKDESDQTN) are enriched in acidic residues.

Belongs to the NusB family.

Its function is as follows. Involved in transcription antitermination. Required for transcription of ribosomal RNA (rRNA) genes. Binds specifically to the boxA antiterminator sequence of the ribosomal RNA (rrn) operons. The polypeptide is Transcription antitermination protein NusB (Bifidobacterium animalis subsp. lactis (strain AD011)).